The sequence spans 501 residues: Rhazimal synthase (501 aa).

Residues 4–24 traverse the membrane as a helical segment; the sequence is MQLSFASAVVYSLIFFVFLLV. N-linked (GlcNAc...) asparagine glycosylation occurs at asparagine 282. Cysteine 442 is a heme binding site.

Belongs to the cytochrome P450 family. Heme serves as cofactor.

It is found in the membrane. The catalysed reaction is (19E)-geissoschizine + reduced [NADPH--hemoprotein reductase] + O2 = rhazimal + oxidized [NADPH--hemoprotein reductase] + 2 H2O + H(+). The enzyme catalyses (19E)-geissoschizine + reduced [NADPH--hemoprotein reductase] + O2 = akuammicine + formate + oxidized [NADPH--hemoprotein reductase] + H2O + H(+). The protein operates within alkaloid biosynthesis. Functionally, a cytochrome P450 monooxygenase involved in the biosynthesis of akuammilan monoterpene indole alkaloids (MIAs) natural products, components with various biological properties such as antidiabetic, antibacterial, anti-inflammatory, anticancer, and antimalarial activities. Catalyzes the conversion of geissoschizine to rhazimal. Can also, with lower efficiency, support the conversion of geissoschizine to akuammicine. The polypeptide is Rhazimal synthase (Alstonia scholaris (Dogbane)).